Reading from the N-terminus, the 508-residue chain is Anaerobic nitric oxide reductase transcription regulator NorR (508 aa).

The residue at position 56 (D56) is a 4-aspartylphosphate. The Sigma-54 factor interaction domain maps to 186–415; sequence MIGQSPAMAR…LEHAIHRAAV (230 aa). Residues 214–221 and 277–286 contribute to the ATP site; these read GETGVGKE and ADQGTLFLDE. The H-T-H motif DNA-binding region spans 483–502; that stretch reads WAATARALELDSGNLHRLAK.

It participates in nitrogen metabolism; nitric oxide reduction. Functionally, required for the expression of anaerobic nitric oxide (NO) reductase, acts as a transcriptional activator for at least the norVW operon. Activation also requires sigma-54. The protein is Anaerobic nitric oxide reductase transcription regulator NorR of Aeromonas hydrophila subsp. hydrophila (strain ATCC 7966 / DSM 30187 / BCRC 13018 / CCUG 14551 / JCM 1027 / KCTC 2358 / NCIMB 9240 / NCTC 8049).